Here is a 336-residue protein sequence, read N- to C-terminus: Probable allantoicase (336 aa).

This sequence belongs to the allantoicase family.

The catalysed reaction is allantoate + H2O = (S)-ureidoglycolate + urea. It participates in nitrogen metabolism; (S)-allantoin degradation; (S)-ureidoglycolate from allantoate (aminidohydrolase route): step 1/1. The sequence is that of Probable allantoicase from Ralstonia nicotianae (strain ATCC BAA-1114 / GMI1000) (Ralstonia solanacearum).